The primary structure comprises 441 residues: NADH-quinone oxidoreductase subunit D (441 aa).

The protein belongs to the complex I 49 kDa subunit family. NDH-1 is composed of 14 different subunits. Subunits NuoB, C, D, E, F, and G constitute the peripheral sector of the complex.

The protein localises to the cell membrane. The enzyme catalyses a quinone + NADH + 5 H(+)(in) = a quinol + NAD(+) + 4 H(+)(out). Functionally, NDH-1 shuttles electrons from NADH, via FMN and iron-sulfur (Fe-S) centers, to quinones in the respiratory chain. The immediate electron acceptor for the enzyme in this species is believed to be a menaquinone. Couples the redox reaction to proton translocation (for every two electrons transferred, four hydrogen ions are translocated across the cytoplasmic membrane), and thus conserves the redox energy in a proton gradient. The chain is NADH-quinone oxidoreductase subunit D from Mycobacterium avium (strain 104).